We begin with the raw amino-acid sequence, 390 residues long: MAQSTVESKNRKDINNGKIPAKETILSPRFYTTDFEAMENMDLSINEEELEAICEEFRKDYNRHHFVRNSEFEGAAEKLDPETRELFVDFLEGSCTSEFSGFLLYKELSKRIKVKNPLLAECFAHMARDEARHAGFLNKSMSDFGLQLDLGFLTANKDYTYFPPRSIFYATYLSEKIGYWRYIAIYRHLEKNPDSKIFPLFNYFENWCQDENRHGDFFDALMKAQPRTVKSLSKKITIGGSTFTHPLFDYFHRFRYFLNNLPLTSKLWSRFFLLAVFATMYARDLGIKKDFYSSLGLDARDYDQFVINKTNETAARVFPVVMDVYDNSFYGRLDKIVENNKVLSDIANSDGNKVSKTFKKLPKYLSNGYQLLRLYLLKPLDSKDFQPSIR.

This sequence belongs to the AcsF family. Requires Fe cation as cofactor.

It carries out the reaction Mg-protoporphyrin IX 13-monomethyl ester + 3 NADPH + 3 O2 + 2 H(+) = 3,8-divinyl protochlorophyllide a + 3 NADP(+) + 5 H2O. Its pathway is porphyrin-containing compound metabolism; chlorophyll biosynthesis (light-independent). Catalyzes the formation of the isocyclic ring in chlorophyll biosynthesis. Mediates the cyclase reaction, which results in the formation of divinylprotochlorophyllide (Pchlide) characteristic of all chlorophylls from magnesium-protoporphyrin IX 13-monomethyl ester (MgPMME). The chain is Magnesium-protoporphyrin IX monomethyl ester [oxidative] cyclase from Prochlorococcus marinus (strain AS9601).